Consider the following 465-residue polypeptide: VGFKAGVKEYKLNYYTPDYDTKDTDILAAFRVSPQPGVPPEEAGAAVAAESSTGTWTTVWTDGLTSLDRYKGRCYEIEPVAGEENQFIAYVAYPLDLFEEGSVTNMLTSIVGNVFGFKALRALRLEDLRIPPAYTKTFQGPPHGIQVERDKLNKYGRPLLGCTIKPKLGLSAKNYGRAVYECLRGGLDFTKDDENVNSQPFMRWRDRFLFCAEALFKAQAETGEIKGHYLNATAGTCEEMIKRAVFARELGVPIVMHDYLTGGFTANTSLAHYCRDNGLLLHIHRAMHAVIDRQKNHGMHFRVLAKALRMSGGDHIHAGTVVGKLEGEREITLGFVDLLRDDFVEKDRSRGIYFTQDWVSLPGVLPVASGGIHVWHMPALTEIFGDDSVLQFGGGTLGHPWGNAPGAVANRVALEACVKARNEGRDLAREGNEIIREASKWSPELAAACEVWKEIKFEFQAMDTL.

The residue at position 4 (lysine 4) is an N6,N6,N6-trimethyllysine. Residues asparagine 113 and threonine 163 each coordinate substrate. Catalysis depends on lysine 165, which acts as the Proton acceptor. Lysine 167 is a substrate binding site. Mg(2+)-binding residues include lysine 191, aspartate 193, and glutamate 194. Lysine 191 is modified (N6-carboxylysine). The active-site Proton acceptor is histidine 284. Positions 285, 317, and 369 each coordinate substrate.

It belongs to the RuBisCO large chain family. Type I subfamily. As to quaternary structure, heterohexadecamer of 8 large chains and 8 small chains; disulfide-linked. The disulfide link is formed within the large subunit homodimers. Mg(2+) is required as a cofactor. Post-translationally, the disulfide bond which can form in the large chain dimeric partners within the hexadecamer appears to be associated with oxidative stress and protein turnover.

The protein localises to the plastid. It localises to the chloroplast. It catalyses the reaction 2 (2R)-3-phosphoglycerate + 2 H(+) = D-ribulose 1,5-bisphosphate + CO2 + H2O. The catalysed reaction is D-ribulose 1,5-bisphosphate + O2 = 2-phosphoglycolate + (2R)-3-phosphoglycerate + 2 H(+). RuBisCO catalyzes two reactions: the carboxylation of D-ribulose 1,5-bisphosphate, the primary event in carbon dioxide fixation, as well as the oxidative fragmentation of the pentose substrate in the photorespiration process. Both reactions occur simultaneously and in competition at the same active site. The chain is Ribulose bisphosphate carboxylase large chain from Ilex crenata (Japanese holly).